Consider the following 311-residue polypeptide: D-allose-binding periplasmic protein (311 aa).

Positions 1–23 are cleaved as a signal peptide; sequence MNKYLKYFSGTLVGLMLSTSAFA.

This sequence belongs to the bacterial solute-binding protein 2 family.

The protein localises to the periplasm. Functionally, part of the binding-protein-dependent transport system AlsBAC for D-allose. In Escherichia coli (strain K12), this protein is D-allose-binding periplasmic protein (alsB).